Consider the following 134-residue polypeptide: Small ribosomal subunit protein uS11 (134 aa).

Residues 114 to 134 (DVTPVPSDSTRRKGGRRGRRL) form a disordered region. A compositionally biased stretch (basic residues) spans 125 to 134 (RKGGRRGRRL).

This sequence belongs to the universal ribosomal protein uS11 family.

This Candida albicans (Yeast) protein is Small ribosomal subunit protein uS11 (RPS14).